The chain runs to 181 residues: Beta-lactoglobulin-2 (181 aa).

The signal sequence occupies residues 1–18 (MKCLLLALGLSLMCGNQA). 2 cysteine pairs are disulfide-bonded: Cys84/Cys179 and Cys124/Cys138.

The protein belongs to the calycin superfamily. Lipocalin family. As to quaternary structure, monomer.

The protein resides in the secreted. Lactoglobulin is the primary component of whey, it binds retinol and is probably involved in the transport of that molecule. In Equus caballus (Horse), this protein is Beta-lactoglobulin-2 (LGB2).